We begin with the raw amino-acid sequence, 364 residues long: tRNA 2-selenouridine synthase (364 aa).

In terms of domain architecture, Rhodanese spans 14-137 (LLADTPLIDV…LRQTAIQATW (124 aa)). Cysteine 97 acts as the S-selanylcysteine intermediate in catalysis.

It belongs to the SelU family. In terms of assembly, monomer.

It carries out the reaction 5-methylaminomethyl-2-thiouridine(34) in tRNA + selenophosphate + (2E)-geranyl diphosphate + H2O + H(+) = 5-methylaminomethyl-2-selenouridine(34) in tRNA + (2E)-thiogeraniol + phosphate + diphosphate. The enzyme catalyses 5-methylaminomethyl-2-thiouridine(34) in tRNA + (2E)-geranyl diphosphate = 5-methylaminomethyl-S-(2E)-geranyl-thiouridine(34) in tRNA + diphosphate. The catalysed reaction is 5-methylaminomethyl-S-(2E)-geranyl-thiouridine(34) in tRNA + selenophosphate + H(+) = 5-methylaminomethyl-2-(Se-phospho)selenouridine(34) in tRNA + (2E)-thiogeraniol. It catalyses the reaction 5-methylaminomethyl-2-(Se-phospho)selenouridine(34) in tRNA + H2O = 5-methylaminomethyl-2-selenouridine(34) in tRNA + phosphate. Functionally, involved in the post-transcriptional modification of the uridine at the wobble position (U34) of tRNA(Lys), tRNA(Glu) and tRNA(Gln). Catalyzes the conversion of 2-thiouridine (S2U-RNA) to 2-selenouridine (Se2U-RNA). Acts in a two-step process involving geranylation of 2-thiouridine (S2U) to S-geranyl-2-thiouridine (geS2U) and subsequent selenation of the latter derivative to 2-selenouridine (Se2U) in the tRNA chain. In Salmonella paratyphi A (strain ATCC 9150 / SARB42), this protein is tRNA 2-selenouridine synthase.